The primary structure comprises 360 residues: DNA polymerase IV (360 aa).

The region spanning 8 to 191 (VLHVDMDSFF…LPVGRIPGIG (184 aa)) is the UmuC domain. Asp-12 and Asp-110 together coordinate Mg(2+). The active site involves Glu-111.

It belongs to the DNA polymerase type-Y family. Monomer. It depends on Mg(2+) as a cofactor.

It localises to the cytoplasm. The catalysed reaction is DNA(n) + a 2'-deoxyribonucleoside 5'-triphosphate = DNA(n+1) + diphosphate. Poorly processive, error-prone DNA polymerase involved in untargeted mutagenesis. Copies undamaged DNA at stalled replication forks, which arise in vivo from mismatched or misaligned primer ends. These misaligned primers can be extended by PolIV. Exhibits no 3'-5' exonuclease (proofreading) activity. May be involved in translesional synthesis. This Methanoculleus marisnigri (strain ATCC 35101 / DSM 1498 / JR1) protein is DNA polymerase IV.